Reading from the N-terminus, the 138-residue chain is Protein FAM136A (138 aa).

N-acetylalanine is present on A2. Phosphothreonine is present on residues T124 and T126.

Belongs to the FAM136 family.

This is Protein FAM136A (FAM136A) from Homo sapiens (Human).